Here is a 1042-residue protein sequence, read N- to C-terminus: Signal-induced proliferation-associated protein 1 (1042 aa).

Disordered regions lie at residues 1–87 (MPMW…TSTR) and 132–153 (SQGM…EDQA). A Phosphothreonine modification is found at Thr64. Position 67 is a phosphoserine (Ser67). Positions 134-146 (GMGSHSEASSGTL) are enriched in polar residues. Phosphoserine occurs at positions 182, 304, and 314. Residues 321-539 (LLTLDEQVLS…RTRQQYLQDL (219 aa)) form the Rap-GAP domain. The region spanning 687–763 (ELALPRDGQG…VCVTVLPPDE (77 aa)) is the PDZ domain. Phosphoserine is present on residues Ser817, Ser839, and Ser912. The interval 830–903 (EFLHSQNSLS…PAPELRASFL (74 aa)) is disordered. Positions 832-845 (LHSQNSLSPRSSLS) are enriched in low complexity. A disordered region spans residues 946–980 (LSREGQPIPESGDPKGTPKSDAEPEPGNLSEKVSH). The span at 957–967 (GDPKGTPKSDA) shows a compositional bias: basic and acidic residues. Residues 972–1034 (GNLSEKVSHL…TRLLLASKQL (63 aa)) adopt a coiled-coil conformation.

As to quaternary structure, interacts with RRP1B; the interaction leads to inhibition of SIPA1 GTPase activity. As to expression, expressed in fetal as well as in adult tissues. Expressed abundantly in the lymphoid tissues such as thymus, spleen and peripheral blood lymphocytes and also shows a significant expression in the spinal cord.

Its subcellular location is the nucleus. It is found in the cytoplasm. It localises to the perinuclear region. The protein resides in the endomembrane system. In terms of biological role, GTPase activator for the nuclear Ras-related regulatory proteins Rap1 and Rap2 in vitro, converting them to the putatively inactive GDP-bound state. Affects cell cycle progression. The protein is Signal-induced proliferation-associated protein 1 (SIPA1) of Homo sapiens (Human).